A 332-amino-acid chain; its full sequence is tRNA dimethylallyltransferase 2 (332 aa).

15–22 is a binding site for ATP; that stretch reads GPTASGKT. Substrate is bound at residue 17–22; that stretch reads TASGKT. Interaction with substrate tRNA stretches follow at residues 40–43 and 164–168; these read DSVM and QRIQR.

It belongs to the IPP transferase family. Monomer. Mg(2+) is required as a cofactor.

It carries out the reaction adenosine(37) in tRNA + dimethylallyl diphosphate = N(6)-dimethylallyladenosine(37) in tRNA + diphosphate. Its function is as follows. Catalyzes the transfer of a dimethylallyl group onto the adenine at position 37 in tRNAs that read codons beginning with uridine, leading to the formation of N6-(dimethylallyl)adenosine (i(6)A). The protein is tRNA dimethylallyltransferase 2 of Hahella chejuensis (strain KCTC 2396).